The sequence spans 246 residues: tRNA (guanine-N(1)-)-methyltransferase (246 aa).

S-adenosyl-L-methionine contacts are provided by residues G113 and 133–138 (IGDYVL).

This sequence belongs to the RNA methyltransferase TrmD family. In terms of assembly, homodimer.

Its subcellular location is the cytoplasm. It catalyses the reaction guanosine(37) in tRNA + S-adenosyl-L-methionine = N(1)-methylguanosine(37) in tRNA + S-adenosyl-L-homocysteine + H(+). In terms of biological role, specifically methylates guanosine-37 in various tRNAs. The chain is tRNA (guanine-N(1)-)-methyltransferase from Yersinia pseudotuberculosis serotype O:1b (strain IP 31758).